The sequence spans 455 residues: Nuclear distribution protein nudF (455 aa).

One can recognise a LisH domain in the interval 9-41 (QAEELHKSMIAYLVASDLPDTAAALRREVNLSE). Positions 61-88 (TSIARLQKKIMDLESRNATLQSELDNST) form a coiled coil. WD repeat units lie at residues 113-154 (SHRD…RTLK), 156-196 (HTRA…KNIR), 200-239 (GHDH…CVKT), 242-281 (GHTD…NIEH), 287-347 (GHEN…LMTL), 349-388 (GHDS…KCVK), 392-438 (AHES…IQMR), and 440-455 (VVAT…IFAG). The segment at 408-431 (KNVPGGDGAAEGEGNDKNGAGSEN) is disordered.

Belongs to the WD repeat LIS1/nudF family. As to quaternary structure, self-associates. Interacts with nudE and dynein.

The protein localises to the cytoplasm. Its subcellular location is the cytoskeleton. It localises to the spindle pole. Functionally, positively regulates the activity of the minus-end directed microtubule motor protein dynein. May enhance dynein-mediated microtubule sliding by targeting dynein to the microtubule plus end. Required for nuclear migration during vegetative growth as well as development. Required for retrograde early endosome (EE) transport from the hyphal tip. Required for localization of dynein to the mitotic spindle poles. Recruits additional proteins to the dynein complex at SPBs. This chain is Nuclear distribution protein nudF, found in Aspergillus flavus (strain ATCC 200026 / FGSC A1120 / IAM 13836 / NRRL 3357 / JCM 12722 / SRRC 167).